We begin with the raw amino-acid sequence, 252 residues long: Streptothricin hydrolase (252 aa).

Residue Cys158 is the Nucleophile of the active site. Over residues 230–242 (AVGPAAAPGLPVS) the composition is skewed to low complexity. Residues 230-252 (AVGPAAAPGLPVSPAAPPPSPVR) are disordered. Positions 243-252 (PAAPPPSPVR) are enriched in pro residues.

Belongs to the isochorismatase family.

The enzyme catalyses streptothricin F + H2O = streptothricin F acid. Functionally, catalyzes the hydrolysis of the amide bond of streptolidine lactam, thereby conferring streptothricin (ST) resistance. Can hydrolyze streptothricin-F and streptothricin-D. However, this strain is believed to be a ST nonproducer, which raises the possibility that its true role may not be its involvement in self-resistance to STs. May catalyze the hydrolysis of naturally occurring cyclic amide compounds that are structurally related to STs. This is Streptothricin hydrolase (sttH) from Streptomyces noursei (Streptomyces albulus).